We begin with the raw amino-acid sequence, 522 residues long: DNA damage-binding protein CMR1 (522 aa).

The segment at 38–100 (AGVLEKSRAP…DNQLLKMGSP (63 aa)) is disordered. Residues 54-63 (TTNTRATKSA) show a composition bias toward polar residues. At serine 64 the chain carries Phosphoserine. Threonine 69 is modified (phosphothreonine). Positions 75 to 84 (LRGESADDVK) are enriched in basic and acidic residues. WD repeat units follow at residues 183–224 (ITYE…LADS), 239–281 (LFTK…EVLT), 287–327 (DDSL…SEYN), 331–371 (LADK…KKPE), 388–427 (DSRL…HLSA), 442–481 (GRWT…LAHL), and 482–521 (PTAT…IKQE). Serine 224 is subject to Phosphoserine.

The protein belongs to the WD repeat DDB2/WDR76 family.

Its subcellular location is the cytoplasm. The protein localises to the nucleus. Functionally, DNA-binding protein that binds to both single- and double-stranded DNA. Binds preferentially to UV-damaged DNA in vitro. May be involved in DNA-metabolic processes. In Saccharomyces cerevisiae (strain ATCC 204508 / S288c) (Baker's yeast), this protein is DNA damage-binding protein CMR1.